A 313-amino-acid chain; its full sequence is Protoheme IX farnesyltransferase (313 aa).

A run of 9 helical transmembrane segments spans residues 33–53 (IALM…PVML), 59–79 (MPSW…AGSA), 107–127 (VEPA…TLMF), 129–149 (LLVN…YVFV), 162–182 (IVIG…AVTG), 188–208 (AVLL…ALAI), 212–232 (DDYA…EVVT), 252–272 (VADI…WFVA), and 292–312 (LFHM…AAAL).

Belongs to the UbiA prenyltransferase family. Protoheme IX farnesyltransferase subfamily.

The protein resides in the cell membrane. The catalysed reaction is heme b + (2E,6E)-farnesyl diphosphate + H2O = Fe(II)-heme o + diphosphate. It participates in porphyrin-containing compound metabolism; heme O biosynthesis; heme O from protoheme: step 1/1. Functionally, converts heme B (protoheme IX) to heme O by substitution of the vinyl group on carbon 2 of heme B porphyrin ring with a hydroxyethyl farnesyl side group. The polypeptide is Protoheme IX farnesyltransferase (Parafrankia sp. (strain EAN1pec)).